Consider the following 834-residue polypeptide: MGKNRKSKRQLIRDEKRAKKRGHENAEEEVRDAKRQRRTDGDEEHNADFIPLDGGNGDIPGFVIDTVGDKRRAHKYEGGEVEAEINGHGGDGGGGGGPGSFEREFFGMLAEEEQEYFRHADELLELNDFPSEEEKTIFLANVYKEAKGKELKLASSQSCSRLMERLILLSNTKQKKSMFDAFSGHFISLVTHRFASHCCEKLFLQSAPVVTQELAGEVPEEVPVEGQEEEELTENQKMSMEDLFLLTLDEFEEHLSFLLSDRYGSHALRVLLLVLAGRPLNQAGVKSLLQGKSKEYVTVEGAAANASELISQTRTVPSSFTAAIQKIIVDSTANLDGAALRVLAKHPTGNPTLQLLLDLELSMAPKGKKKAKKGEEEERQEEPVKETLLEKLVPGAPASFAEETSPACEFVNSMVYDPIGSRLLETLITHCPGKVFKGLHAHIFGPRIQSFLRNDIASYPAIKVLNRLSKEDLADAVEKSLPEFGALLEKGRLNVVRTYFERCHVRNATAQLDQLLQALTKACNNNWKHIVPKLCPLEEENEEDKSKEKKFQPAEVKNKTALLSHGCQIVSTLLSIPGNPAKAMQTSLLALPADKILRMATLNAHTAGIVTKALSTPPQLPHFHKLFVAAMLPNIIDMALTHHGNPIVCSIITMASKGDKDVPVVPFHLKENVMAKLEQRESQLRESWLGRNVWRSWKGDLWSNRRHDWVRWAKETNPEELRLAAAAGGAKTLEKQEEALKKRTEALQEEAFPEEMEEDQPEESEPVKVKKEKKEKKEKKEKKEKKEKKEKKEKKEKKEKKEKKEKKEKKEKKEKKEKKEKKPKVEEDAMEIDG.

The span at 1-10 (MGKNRKSKRQ) shows a compositional bias: basic residues. Residues 1 to 54 (MGKNRKSKRQLIRDEKRAKKRGHENAEEEVRDAKRQRRTDGDEEHNADFIPLDG) form a disordered region. The segment covering 38–47 (RTDGDEEHNA) has biased composition (basic and acidic residues). Pumilio repeat units follow at residues 145 to 180 (EAKG…SMFD), 181 to 216 (AFSG…ELAG), 250 to 290 (EFEE…SLLQ), and 630 to 666 (AMLP…PVVP). The span at 749-764 (EEAFPEEMEEDQPEES) shows a compositional bias: acidic residues. A disordered region spans residues 749-834 (EEAFPEEMEE…VEEDAMEIDG (86 aa)). Residues 770–822 (KKEKKEKKEKKEKKEKKEKKEKKEKKEKKEKKEKKEKKEKKEKKEKKEKKEKK) are compositionally biased toward basic residues.

It belongs to the NOP9 family.

It localises to the nucleus. Its subcellular location is the nucleolus. Functionally, RNA-binding nucleolar protein required for pre-rRNA processing. Involved in production of 18S rRNA and assembly of small ribosomal subunit. This is Nucleolar protein 9 (NOP9) from Podospora anserina (strain S / ATCC MYA-4624 / DSM 980 / FGSC 10383) (Pleurage anserina).